The chain runs to 375 residues: Aldehyde reductase FrzD (375 aa).

FMN is bound by residues A61, Q103, and H171. Y176 serves as the catalytic Proton donor. FMN is bound by residues K223, G294, and R319.

It belongs to the NADH:flavin oxidoreductase/NADH oxidase family. The cofactor is FMN.

The catalysed reaction is (1S,4S)-4-[(4-hydroxyphenyl)methyl]-2,5-diazaspiro[bicyclo[3.2.1]octane-6,1'-cyclohexane]-2',5'-dien-4'-one + 2 NADPH + 2 H(+) = (1S,4S)-4-[(4-hydroxyphenyl)methyl]-2,5-diazaspiro[bicyclo[3.2.1]octane-6,1'-cyclohexan]-4'-one + 2 NADP(+). It functions in the pathway alkaloid biosynthesis; ergot alkaloid biosynthesis. In terms of biological role, aldehyde reductase; part of the gene cluster that mediates the biosynthesis of the alkaloid (-)-FR901483, a potent immunosuppressant that shows efficacy in animal models and a probable inhibitor of purine nucleotide biosynthesis by targeting phosphoribosylpyrophosphate amidotransferase (PPAT). Within the pathway, FrzD reduces the dienone portion of the pathway intermediates to cyclohexanone. The biosynthesis of (-)-FR901483 starts with the condensation of two L-tyrosines to yield (S,S)-dityrosyl-piperazine. This process occurs in 3 steps with the non-canonical nonribosomal peptide synthetase FrzA catalyzing the reduction of L-tyrosine into L-tyrosinal, the spontaneous condensation of 2 L-tyrosinal units, and the subsequent reduction by the NmrA-like family domain-containing oxidoreductase FrzB. The cytochrome P450 monooxygenase FrzC then performs coupling between N10 and C1' to morph the piperazine into a 1,4-diazabicyclo[3.2.1]octane spiro-fused to a 2,5-cyclohexadienone. The dienone portion is further reduced to cyclohexanone by the flavin-dependent reductase FrzD. The methyltranserases (MTs) FrzE and FrzF are then involved in the methylation at the C10' amine and the C4 phenolic oxygen, respectively. The order of the two MTs appear to be interchangeable. Cleavage of the C9-N10' bond by the dioxygenase FrzG then leads to formation of a conjugated iminium. In addition to the oxidation of C9, an additional dehydrogenation between C7 and C8 can occur to give a likely shunt product. The next biosynthetic step is the intramolecular aldol condensation catalyzed by the newly identified aldolase FrzH to yield an aza-tricyclic product with the formation of a C9-C3' bond. The short-chain dehydrogenase/reductase FrzI then produces dephospho-(-)-FR901483 that is phosphorylated at C4'-OH into (-)-FR901483 by the phosphotransferase FrzJ. The only unassigned enzyme in the cluster is the second cytochrome P450 monooxygenase FrzL. The sequence is that of Aldehyde reductase FrzD from Cladobotryum sp.